The chain runs to 438 residues: V-type ATP synthase beta chain (438 aa).

It belongs to the ATPase alpha/beta chains family.

Its function is as follows. Produces ATP from ADP in the presence of a proton gradient across the membrane. The V-type beta chain is a regulatory subunit. The protein is V-type ATP synthase beta chain of Chlamydia trachomatis serovar L2b (strain UCH-1/proctitis).